The following is a 1142-amino-acid chain: Zinc finger MYM-type protein 1 (1142 aa).

Lys25 participates in a covalent cross-link: Glycyl lysine isopeptide (Lys-Gly) (interchain with G-Cter in SUMO2). MYM-type zinc fingers lie at residues 110-148 (QLFC…PKDV), 160-203 (KTFC…QYEV), and 210-245 (HNLC…SSSL). Residue Lys284 forms a Glycyl lysine isopeptide (Lys-Gly) (interchain with G-Cter in SUMO2) linkage. Residues 300 to 331 (ELFCSINCFSAYSKAKMESSSVSVVSVVHDTS) form an MYM-type 4 zinc finger. The segment covering 385–396 (KSSPSEPSNAVA) has biased composition (polar residues). The tract at residues 385–413 (KSSPSEPSNAVASSSTEQPSVSPSSSVFS) is disordered. Over residues 397–413 (SSSTEQPSVSPSSSVFS) the composition is skewed to low complexity. The TTF-type zinc finger occupies 452–538 (KSRSIKKSCC…YQFCDGAVSD (87 aa)).

The protein resides in the nucleus. The protein is Zinc finger MYM-type protein 1 (ZMYM1) of Homo sapiens (Human).